Reading from the N-terminus, the 428-residue chain is Keratin, type I cytoskeletal 18-A (428 aa).

A head region spans residues S2–N78. Positions S24 to G45 are disordered. The interval E79–H114 is coil 1A. The IF rod domain occupies E79 to L389. Residues T115–T130 form a linker 1 region. A coil 1B region spans residues I131–L222. The linker 12 stretch occupies residues Q223–I246. Residues M247–G384 are coil 2. The interval D385 to S428 is tail.

The protein belongs to the intermediate filament family. As to quaternary structure, heterotetramer of two type I and two type II keratins. Keratin-18 associates with keratin-8. Proteolytically cleaved by caspases during epithelial cell apoptosis. In terms of tissue distribution, expressed at high levels in notochord and low levels in adult liver.

When phosphorylated, plays a role in filament reorganization. This Xenopus laevis (African clawed frog) protein is Keratin, type I cytoskeletal 18-A (krt18-a).